We begin with the raw amino-acid sequence, 352 residues long: Photosystem II D2 protein (352 aa).

The residue at position 2 (Thr2) is an N-acetylthreonine. Phosphothreonine is present on Thr2. A helical transmembrane segment spans residues 40–60 (CAYFALGGWLTGTTFVSSWYT). His117 serves as a coordination point for chlorophyll a. A helical transmembrane segment spans residues 124–140 (GFMLRQFEIARAVQIRP). Residues Gln129 and Asn142 each coordinate pheophytin a. The chain crosses the membrane as a helical span at residues 152 to 165 (VFVSVFLIYPLGQS). His197 serves as a coordination point for chlorophyll a. The chain crosses the membrane as a helical span at residues 207 to 227 (AALLCAIHGATVENTLFEDGD). The a plastoquinone site is built by His214 and Phe261. His214 serves as a coordination point for Fe cation. His268 lines the Fe cation pocket. The chain crosses the membrane as a helical span at residues 278–294 (GLWMSALGVVGLALNLR).

Belongs to the reaction center PufL/M/PsbA/D family. In terms of assembly, PSII is composed of 1 copy each of membrane proteins PsbA, PsbB, PsbC, PsbD, PsbE, PsbF, PsbH, PsbI, PsbJ, PsbK, PsbL, PsbM, PsbT, PsbX, PsbY, PsbZ, Psb30/Ycf12, at least 3 peripheral proteins of the oxygen-evolving complex and a large number of cofactors. It forms dimeric complexes. The cofactor is The D1/D2 heterodimer binds P680, chlorophylls that are the primary electron donor of PSII, and subsequent electron acceptors. It shares a non-heme iron and each subunit binds pheophytin, quinone, additional chlorophylls, carotenoids and lipids. There is also a Cl(-1) ion associated with D1 and D2, which is required for oxygen evolution. The PSII complex binds additional chlorophylls, carotenoids and specific lipids..

It localises to the plastid. It is found in the chloroplast thylakoid membrane. The catalysed reaction is 2 a plastoquinone + 4 hnu + 2 H2O = 2 a plastoquinol + O2. Its function is as follows. Photosystem II (PSII) is a light-driven water:plastoquinone oxidoreductase that uses light energy to abstract electrons from H(2)O, generating O(2) and a proton gradient subsequently used for ATP formation. It consists of a core antenna complex that captures photons, and an electron transfer chain that converts photonic excitation into a charge separation. The D1/D2 (PsbA/PsbD) reaction center heterodimer binds P680, the primary electron donor of PSII as well as several subsequent electron acceptors. D2 is needed for assembly of a stable PSII complex. This chain is Photosystem II D2 protein, found in Ostreococcus tauri.